The sequence spans 119 residues: Probable prefoldin subunit 6 (119 aa).

This sequence belongs to the prefoldin subunit beta family. Heterohexamer of two PFD-alpha type and four PFD-beta type subunits. May interact with MSP1.

Its function is as follows. Binds specifically to cytosolic chaperonin (c-CPN) and transfers target proteins to it. Binds to nascent polypeptide chain and promotes folding in an environment in which there are many competing pathways for nonnative proteins. The chain is Probable prefoldin subunit 6 from Plasmodium falciparum (isolate 3D7).